A 201-amino-acid chain; its full sequence is Alpha-1-acid glycoprotein 1 (201 aa).

The first 18 residues, Met-1–Ala-18, serve as a signal peptide directing secretion. Residue Gln-19 is modified to Pyrrolidone carboxylic acid. 2 disulfides stabilise this stretch: Cys-23-Cys-165 and Cys-90-Cys-183. N-linked (GlcNAc...) (complex) asparagine glycosylation is present at Asn-33. N-linked (GlcNAc...) asparagine glycosylation occurs at Asn-56. N-linked (GlcNAc...) (complex) asparagine glycosylation occurs at Asn-72. Residues Asn-93 and Asn-103 are each glycosylated (N-linked (GlcNAc...) asparagine).

The protein belongs to the calycin superfamily. Lipocalin family. N-glycosylated. N-glycan heterogeneity at Asn-33: Hex5HexNAc4 (minor), Hex6HexNAc5 (major) and dHex1Hex6HexNAc5 (minor). In terms of tissue distribution, expressed by the liver and secreted in plasma.

It is found in the secreted. Functionally, functions as a transport protein in the blood stream. Binds various ligands in the interior of its beta-barrel domain. Also binds synthetic drugs and influences their distribution and availability in the body. Appears to function in modulating the activity of the immune system during the acute-phase reaction. This chain is Alpha-1-acid glycoprotein 1 (ORM1), found in Homo sapiens (Human).